The chain runs to 189 residues: GMP synthase [glutamine-hydrolyzing] subunit A (189 aa).

The Glutamine amidotransferase type-1 domain maps to 1–189; that stretch reads MIVILNNGGQ…CKVCGFKFNE (189 aa). Cys-76 functions as the Nucleophile in the catalytic mechanism. Residues His-163 and Glu-165 contribute to the active site.

As to quaternary structure, heterodimer composed of a glutamine amidotransferase subunit (A) and a GMP-binding subunit (B).

It catalyses the reaction XMP + L-glutamine + ATP + H2O = GMP + L-glutamate + AMP + diphosphate + 2 H(+). It participates in purine metabolism; GMP biosynthesis; GMP from XMP (L-Gln route): step 1/1. Its function is as follows. Catalyzes the synthesis of GMP from XMP. The sequence is that of GMP synthase [glutamine-hydrolyzing] subunit A from Methanococcus vannielii (strain ATCC 35089 / DSM 1224 / JCM 13029 / OCM 148 / SB).